Reading from the N-terminus, the 84-residue chain is MDRLNVKEQEHLTQVLEAKQLKEYLNMYSTLTQNCFSDCVQDFTSSKLSNKESECIAKCADKFLKHSERVGQRFAEFNAKYMGQ.

Residues 35 to 59 (CFSDCVQDFTSSKLSNKESECIAKC) carry the Twin CX3C motif motif. Cystine bridges form between cysteine 35/cysteine 59 and cysteine 39/cysteine 55.

This sequence belongs to the small Tim family. In terms of assembly, heterohexamer; composed of 3 copies of TIM9 and 3 copies of TIM10, named soluble 70 kDa complex. Associates with the TIM22 complex, whose core is composed of TIM22 and TIM54. Interacts with the transmembrane regions of multi-pass transmembrane proteins in transit.

It is found in the mitochondrion inner membrane. Its function is as follows. Mitochondrial intermembrane chaperone that participates in the import and insertion of multi-pass transmembrane proteins into the mitochondrial inner membrane. Also required for the transfer of beta-barrel precursors from the TOM complex to the sorting and assembly machinery (SAM complex) of the outer membrane. Acts as a chaperone-like protein that protects the hydrophobic precursors from aggregation and guide them through the mitochondrial intermembrane space. The sequence is that of Mitochondrial import inner membrane translocase subunit tim9 (tim9) from Schizosaccharomyces pombe (strain 972 / ATCC 24843) (Fission yeast).